Here is a 496-residue protein sequence, read N- to C-terminus: Steroid 21-hydroxylase (496 aa).

S109 contacts heme b. A 17alpha-hydroxyprogesterone-binding site is contributed by R232. R232 contributes to the progesterone binding site. 3 residues coordinate heme b: H364, R425, and C427.

The protein belongs to the cytochrome P450 family. The cofactor is heme b.

It is found in the endoplasmic reticulum membrane. It localises to the microsome membrane. It catalyses the reaction progesterone + reduced [NADPH--hemoprotein reductase] + O2 = 21-hydroxyprogesterone + oxidized [NADPH--hemoprotein reductase] + H2O + H(+). The catalysed reaction is 17alpha-hydroxyprogesterone + reduced [NADPH--hemoprotein reductase] + O2 = 11-deoxycortisol + oxidized [NADPH--hemoprotein reductase] + H2O + H(+). Its function is as follows. A cytochrome P450 monooxygenase that plays a major role in adrenal steroidogenesis. Catalyzes the hydroxylation at C-21 of progesterone and 17alpha-hydroxyprogesterone to respectively form 11-deoxycorticosterone and 11-deoxycortisol, intermediate metabolites in the biosynthetic pathway of mineralocorticoids and glucocorticoids. Mechanistically, uses molecular oxygen inserting one oxygen atom into a substrate, and reducing the second into a water molecule, with two electrons provided by NADPH via cytochrome P450 reductase (CPR; NADPH-ferrihemoprotein reductase). In Bos taurus (Bovine), this protein is Steroid 21-hydroxylase (CYP21).